A 152-amino-acid chain; its full sequence is Leptin (152 aa).

The signal sequence occupies residues 1-26 (MDHILALVLALLPLSLCVALPGALDA). The cysteines at positions 109 and 152 are disulfide-linked.

Belongs to the leptin family. In terms of tissue distribution, expressed mostly in the liver.

Its subcellular location is the secreted. May function as part of a signaling pathway that acts to regulate the size of the body fat depot. The polypeptide is Leptin (lep) (Takifugu rubripes (Japanese pufferfish)).